Reading from the N-terminus, the 291-residue chain is 3-hydroxy-5-phosphonooxypentane-2,4-dione thiolase (291 aa).

The Schiff-base intermediate with substrate role is filled by lysine 203.

The protein belongs to the DeoC/FbaB aldolase family. In terms of assembly, homodecamer.

It localises to the cytoplasm. The catalysed reaction is dihydroxyacetone phosphate + acetyl-CoA = 3-hydroxy-2,4-dioxopentyl phosphate + CoA. Involved in the degradation of phospho-AI-2, thereby terminating induction of the lsr operon and closing the AI-2 signaling cycle. Catalyzes the transfer of an acetyl moiety from 3-hydroxy-5-phosphonooxypentane-2,4-dione to CoA to form glycerone phosphate and acetyl-CoA. This Salmonella typhimurium (strain LT2 / SGSC1412 / ATCC 700720) protein is 3-hydroxy-5-phosphonooxypentane-2,4-dione thiolase.